The sequence spans 200 residues: MMLFGKVSQQLCGIKKLPWSCDSRYFWGWLNAVFNKVDYDRIRDVGPDRAASEWLLRCGAMVRYHGQERWQTDYNHLPTGPLDKYKIQAIDATNSCIMSIGFDHMVGLQHVEKIRLCKCHFIEDDCLLRLGQLENLQKSILEMEIISCGNITDKGIIASRHLRNLKYLLLSDLPGVREKENLIQVFETALPSLELKLQLK.

The N-terminal 25 residues, 1 to 25 (MMLFGKVSQQLCGIKKLPWSCDSRY), are a transit peptide targeting the mitochondrion. The interval 1 to 61 (MMLFGKVSQQ…SEWLLRCGAM (61 aa)) is N-terminal domain. Position 59 (Gly59) interacts with Mg(2+). LRR repeat units follow at residues 62 to 87 (VRYH…KYKI), 88 to 116 (QAID…KIRL), 117 to 141 (CKCH…KSIL), and 142 to 173 (EMEI…LSDL). Thr93 is a binding site for Mg(2+).

It belongs to the ATP synthase subunit s family. As to quaternary structure, homotetramer. Associates with ATP synthase.

It localises to the mitochondrion. It is found in the mitochondrion inner membrane. Involved in regulation of mitochondrial membrane ATP synthase. Necessary for H(+) conduction of ATP synthase. Facilitates energy-driven catalysis of ATP synthesis by blocking a proton leak through an alternative proton exit pathway. This Macaca fascicularis (Crab-eating macaque) protein is ATP synthase subunit s, mitochondrial (DMAC2L).